We begin with the raw amino-acid sequence, 157 residues long: Small ribosomal subunit protein uS7 (157 aa).

The protein belongs to the universal ribosomal protein uS7 family. Part of the 30S ribosomal subunit. Contacts proteins S9 and S11.

Its function is as follows. One of the primary rRNA binding proteins, it binds directly to 16S rRNA where it nucleates assembly of the head domain of the 30S subunit. Is located at the subunit interface close to the decoding center, probably blocks exit of the E-site tRNA. This Hydrogenovibrio crunogenus (strain DSM 25203 / XCL-2) (Thiomicrospira crunogena) protein is Small ribosomal subunit protein uS7.